The sequence spans 292 residues: Insulin-like growth factor-binding protein 3 (292 aa).

A signal peptide spans 1-27 (MHPARPALWAAALTALTLLRGPPVARA). The IGFBP N-terminal domain occupies 36 to 119 (PVVRCEPCDA…LNGRGFCANA (84 aa)). 6 cysteine pairs are disulfide-bonded: cysteine 40–cysteine 69, cysteine 43–cysteine 71, cysteine 51–cysteine 72, cysteine 60–cysteine 75, cysteine 83–cysteine 96, and cysteine 90–cysteine 116. Residues asparagine 118 and asparagine 137 are each glycosylated (N-linked (GlcNAc...) asparagine). Disordered stretches follow at residues 128 to 152 (YLPS…SVES) and 178 to 212 (KGHA…TEYG). Serine 149 is subject to Phosphoserine. Over residues 178-191 (KGHARDSQRYKVDY) the composition is skewed to basic and acidic residues. A compositionally biased stretch (polar residues) spans 192 to 203 (ESQSTDTQNFSS). Asparagine 200 carries N-linked (GlcNAc...) asparagine glycosylation. Phosphoserine is present on serine 202. Residues 211-286 (YGPCRREMED…DTKGKDDVHC (76 aa)) enclose the Thyroglobulin type-1 domain. Intrachain disulfides connect cysteine 214-cysteine 241, cysteine 252-cysteine 263, and cysteine 265-cysteine 286.

In terms of assembly, interacts with XLKD1. Binds IGF2 more than IGF1. Forms a ternary complex of about 140 to 150 kDa with IGF1 or IGF2 and a 85 kDa glycoprotein (ALS). Interacts with TMEM219. In terms of processing, phosphorylated by FAM20C in the extracellular medium.

The protein resides in the secreted. Functionally, IGF-binding proteins prolong the half-life of the IGFs and have been shown to either inhibit or stimulate the growth promoting effects of the IGFs on cell culture. They alter the interaction of IGFs with their cell surface receptors. Also exhibits IGF-independent antiproliferative and apoptotic effects mediated by its receptor TMEM219/IGFBP-3R. Promotes testicular germ cell apoptosis. In Mus musculus (Mouse), this protein is Insulin-like growth factor-binding protein 3 (Igfbp3).